Here is an 83-residue protein sequence, read N- to C-terminus: Probable calcium-binding protein CML29 (83 aa).

EF-hand domains are found at residues 5-40 and 43-75; these read TEKAEHDRIFKKFDANGDGKISAAELEEALKTLGSV and DDVKRMMAEIDTDGDGNISYQEFTDFAGANRGL. Aspartate 18, asparagine 20, aspartate 22, lysine 24, glutamate 29, aspartate 53, aspartate 55, aspartate 57, asparagine 59, and glutamate 64 together coordinate Ca(2+).

Potential calcium sensor. The polypeptide is Probable calcium-binding protein CML29 (CML29) (Arabidopsis thaliana (Mouse-ear cress)).